Reading from the N-terminus, the 325-residue chain is Pyruvate dehydrogenase E1 component subunit beta (325 aa).

A thiamine diphosphate-binding site is contributed by Glu60.

As to quaternary structure, heterodimer of an alpha and a beta chain. Thiamine diphosphate is required as a cofactor.

It catalyses the reaction N(6)-[(R)-lipoyl]-L-lysyl-[protein] + pyruvate + H(+) = N(6)-[(R)-S(8)-acetyldihydrolipoyl]-L-lysyl-[protein] + CO2. The pyruvate dehydrogenase complex catalyzes the overall conversion of pyruvate to acetyl-CoA and CO(2). It contains multiple copies of three enzymatic components: pyruvate dehydrogenase (E1), dihydrolipoamide acetyltransferase (E2) and lipoamide dehydrogenase (E3). The sequence is that of Pyruvate dehydrogenase E1 component subunit beta (pdhB) from Staphylococcus aureus (strain Mu50 / ATCC 700699).